A 207-amino-acid chain; its full sequence is MAEDLDELLDEVESKFCTPDLLRRGMVEQPKGCGGGTHSSDRNQAKAKETLRSTETFKKEDDLDSLINEILEEPNLDKKPSKLKSKSSGNTSVRASIEGLGKSCSPVYLGGSSIPCGIGTNISWRACDHLRCIACDFLVVSYDDYMWDKSCDYLFFRNNMPEFHKLKAKLIKKKGTRAYACQCSWRTIEEVTDLQTDHQLRWVCGKH.

Positions 1 to 75 are required for interaction with FAM161A; that stretch reads MAEDLDELLD…LINEILEEPN (75 aa). Positions 26–52 are disordered; that stretch reads MVEQPKGCGGGTHSSDRNQAKAKETLR. The span at 39 to 52 shows a compositional bias: basic and acidic residues; sequence SSDRNQAKAKETLR.

In terms of assembly, interacts (via N-terminus) with FAM161A (via central region); the interaction is direct. As to expression, widely expressed, with highest levels in heart and brain. Also expressed in the retina (at protein level).

It is found in the cytoplasm. It localises to the photoreceptor inner segment. May be involved in photoreceptor outer segment disk morphogenesis. This is Cilia- and flagella-associated protein 418 from Homo sapiens (Human).